Consider the following 161-residue polypeptide: Probable endopeptidase HI_1314 (161 aa).

The signal sequence occupies residues 1–18 (MKVYKSFLIATASLFLFA). Residue C19 is the site of N-palmitoyl cysteine attachment. The S-diacylglycerol cysteine moiety is linked to residue C19. The NlpC/P60 domain occupies 39–161 (IMAIAMLSEQ…SKAFWQVRRI (123 aa)). C69 acts as the Nucleophile in catalysis. H122 serves as the catalytic Proton acceptor. Residue H134 is part of the active site.

Belongs to the peptidase C40 family.

It localises to the cell membrane. In Haemophilus influenzae (strain ATCC 51907 / DSM 11121 / KW20 / Rd), this protein is Probable endopeptidase HI_1314.